A 531-amino-acid chain; its full sequence is Basal body-orientation factor 1 (531 aa).

The span at 1–19 (MPKLKVKAGKGKKGKRKKA) shows a compositional bias: basic residues. The interval 1–32 (MPKLKVKAGKGKKGKRKKAGKNEHRLDKESEV) is disordered. The segment covering 20-32 (GKNEHRLDKESEV) has biased composition (basic and acidic residues). Coiled-coil stretches lie at residues 26–213 (LDKE…AEKA) and 274–365 (VQEK…VESF). The segment at 465–505 (QSRKSPGLKPSPPADVSSIKEKEINTSNLEEKPEESSSTFI) is disordered. The span at 482–499 (SIKEKEINTSNLEEKPEE) shows a compositional bias: basic and acidic residues.

The protein belongs to the BBOF1 family. As to expression, multiciliated cells.

The protein localises to the cytoplasm. The protein resides in the cytoskeleton. It localises to the cilium basal body. In terms of biological role, basal body protein required in multiciliate cells to align and maintain cilia orientation in response to flow. May act by mediating a maturation step that stabilizes and aligns cilia orientation. Not required to respond to planar cell polarity (PCP) or flow-based orientation cues. This chain is Basal body-orientation factor 1 (ccdc176), found in Xenopus laevis (African clawed frog).